Consider the following 49-residue polypeptide: uncharacterized protein (49 aa).

The first 22 residues, M1–M22, serve as a signal peptide directing secretion.

The protein resides in the secreted. This is an uncharacterized protein from Dictyostelium discoideum (Social amoeba).